Here is a 546-residue protein sequence, read N- to C-terminus: MFS-type transporter patC (546 aa).

Residues 1–15 show a composition bias toward polar residues; sequence MSIDASPSESVLESQ. The tract at residues 1–29 is disordered; sequence MSIDASPSESVLESQTPDRVDESIPIKAE. A compositionally biased stretch (basic and acidic residues) spans 16-29; the sequence is TPDRVDESIPIKAE. 14 consecutive transmembrane segments (helical) span residues 41–61, 89–109, 113–133, 143–163, 171–191, 203–223, 245–265, 277–297, 318–338, 350–370, 379–399, 416–436, 447–467, and 515–535; these read IVGFRWLLVCIAVFSANLLYG, VGFTLGSVVFILPLGKAYAIF, WLFLGCLTMFAAGSALCGAAP, VWAGAGGAGMYLGNLNLITIL, VYVGLVGLIYGTGCILGPIIG, WSFYLNLVIFGVMSPIYVFLL, WVGTVLSAGMHISIILFIVFG, IALYVVSAVLTIAFVLSQYFC, LLLYIIMACGGAALFVAVYYI, GIMSAVRLLPFVCFYVATILL, GYFIIWYLMSGVFMLIGAVLM, ILMGLGMTTTQAAYAVGPAIV, FMNIGQGQSQLLGLAIASAIF, and VIVSSISDVYVMAISAGALYV.

The protein belongs to the major facilitator superfamily. TCR/Tet family.

It is found in the vacuole membrane. It localises to the cell membrane. In terms of biological role, MFS-type transporter; part of the gene cluster that mediates the biosynthesis of patulin, an acetate-derived tetraketide mycotoxin produced by several fungal species that shows antimicrobial properties against several bacteria. May be involved in the secretion of E-ascladiol to be converted to patulin by the secreted patulin synthase patE. This Penicillium expansum (Blue mold rot fungus) protein is MFS-type transporter patC.